The primary structure comprises 270 residues: ATP synthase subunit a (270 aa).

The next 5 membrane-spanning stretches (helical) occupy residues 40-60, 98-118, 143-163, 208-228, and 239-259; these read IDSL…FYAV, IAPL…MDLV, DVNI…YYSI, LFGN…MLPW, and AIFH…LTIV.

It belongs to the ATPase A chain family. In terms of assembly, F-type ATPases have 2 components, CF(1) - the catalytic core - and CF(0) - the membrane proton channel. CF(1) has five subunits: alpha(3), beta(3), gamma(1), delta(1), epsilon(1). CF(0) has three main subunits: a(1), b(2) and c(9-12). The alpha and beta chains form an alternating ring which encloses part of the gamma chain. CF(1) is attached to CF(0) by a central stalk formed by the gamma and epsilon chains, while a peripheral stalk is formed by the delta and b chains.

The protein resides in the cell inner membrane. Key component of the proton channel; it plays a direct role in the translocation of protons across the membrane. The polypeptide is ATP synthase subunit a (Vibrio vulnificus (strain CMCP6)).